The following is a 46-amino-acid chain: Esculentin-1SEb (46 aa).

The cysteines at positions 40 and 46 are disulfide-linked.

Expressed by the skin glands.

The protein localises to the secreted. Mast cell degranulating peptide. Causes histamine release from rat peritoneal mast cells in vitro. Has antibacterial activity against the Gram-negative bacterium E.coli K12 and Gram-positive bacterium M.luteus NCT C2665. In Lithobates sevosus (Dusky gopher frog), this protein is Esculentin-1SEb.